The chain runs to 297 residues: ATP synthase subunit gamma, mitochondrial (297 aa).

Belongs to the ATPase gamma chain family. F-type ATPases have 2 components, CF(1) - the catalytic core - and CF(0) - the membrane proton channel. CF(1) has five subunits: alpha(3), beta(3), gamma(1), delta(1), epsilon(1). CF(0) has three main subunits: a, b and c.

The protein resides in the mitochondrion. Its subcellular location is the mitochondrion inner membrane. Mitochondrial membrane ATP synthase (F(1)F(0) ATP synthase or Complex V) produces ATP from ADP in the presence of a proton gradient across the membrane which is generated by electron transport complexes of the respiratory chain. F-type ATPases consist of two structural domains, F(1) - containing the extramembraneous catalytic core, and F(0) - containing the membrane proton channel, linked together by a central stalk and a peripheral stalk. During catalysis, ATP synthesis in the catalytic domain of F(1) is coupled via a rotary mechanism of the central stalk subunits to proton translocation. Part of the complex F(1) domain and the central stalk which is part of the complex rotary element. The gamma subunit protrudes into the catalytic domain formed of alpha(3)beta(3). Rotation of the central stalk against the surrounding alpha(3)beta(3) subunits leads to hydrolysis of ATP in three separate catalytic sites on the beta subunits. This Drosophila melanogaster (Fruit fly) protein is ATP synthase subunit gamma, mitochondrial.